We begin with the raw amino-acid sequence, 577 residues long: Phosphatidylinositol/phosphatidylcholine transfer protein SFH14 (577 aa).

The interval 1–22 (MSGREQTGEKLSDSEYIEEEPR) is disordered. Residues 136–311 (ELDEVTRHYP…FLGGLCKCPN (176 aa)) enclose the CRAL-TRIO domain. A disordered region spans residues 364 to 383 (ETLKEEPEPEEYYSSTGSRS). Positions 523 to 550 (EANEKLLAESLERIKSLELDLDKTKSVL) form a coiled coil.

Belongs to the SFH family.

The protein localises to the golgi apparatus membrane. It is found in the cell membrane. Its function is as follows. Required for transport of secretory proteins from the Golgi complex. Catalyzes the transfer of phosphatidylinositol and phosphatidylcholine between membranes in vitro. The polypeptide is Phosphatidylinositol/phosphatidylcholine transfer protein SFH14 (SFH14) (Arabidopsis thaliana (Mouse-ear cress)).